The chain runs to 1425 residues: Rho GTPase-activating protein 31 (1425 aa).

One can recognise a Rho-GAP domain in the interval 21–216 (CDLTEYLESS…FILNHADQIF (196 aa)). Positions 258 to 277 (LATNHPARKERRENSLPEIV) are disordered. At S272 the chain carries Phosphoserine. Position 283 is a phosphothreonine (T283). Phosphoserine is present on residues S343, S346, S384, and S464. Low complexity predominate over residues 511 to 522 (EEFSFQGSESGG). Disordered stretches follow at residues 511–621 (EEFS…GAGT), 652–700 (SEEE…TRDA), and 756–951 (IEIG…GNSH). Composition is skewed to basic and acidic residues over residues 543-556 (AATEDTKPEPEVPG) and 587-600 (KEAEKRPKAEKVME). The segment covering 603–615 (QGASQPKPSTPQE) has biased composition (polar residues). T666 is modified (phosphothreonine). The segment covering 671-681 (ESSPAPFPFPE) has biased composition (pro residues). Phosphoserine occurs at positions 685, 690, and 765. Residues 767–777 (PLTPAPPPPTP) show a composition bias toward pro residues. The residue at position 769 (T769) is a Phosphothreonine. Position 776 is a phosphothreonine; by GSK3 (T776). Basic and acidic residues predominate over residues 789 to 804 (EGPDREDAARDSRTDV). Positions 936–951 (LRQSHSLDSKTTGNSH) are enriched in polar residues. A phosphoserine mark is found at S961, S1092, S1093, and S1163. The segment at 1031-1095 (KEQEPQLELS…KGKHRPSSLN (65 aa)) is disordered. 3 stretches are compositionally biased toward polar residues: residues 1196–1206 (QIPQPLPSQST), 1250–1260 (QETGASASRRQ), and 1299–1308 (TEPSGDNLLS). Disordered stretches follow at residues 1196–1260 (QIPQ…SRRQ) and 1291–1327 (QCRKRTSETEPSGDNLLSSKLERASGGPKAFHRSRPG).

As to quaternary structure, interacts with ITSN1, which inhibits GAP activity. Interacts with PARVA. Interacts with GTP-loaded RHOU. Phosphorylated on Thr-776 by GSK3; which reduces GAP activity. In terms of tissue distribution, expressed at highest levels in heart and lung.

The protein localises to the cell projection. It localises to the lamellipodium. The protein resides in the cell junction. It is found in the focal adhesion. Its function is as follows. Functions as a GTPase-activating protein (GAP) for RAC1 and CDC42. Required for cell spreading, polarized lamellipodia formation and cell migration. The chain is Rho GTPase-activating protein 31 (Arhgap31) from Mus musculus (Mouse).